Here is a 153-residue protein sequence, read N- to C-terminus: Cytochrome c-type biogenesis protein CcmE (153 aa).

Residues 1 to 8 lie on the Cytoplasmic side of the membrane; it reads MMTPRQRR. The chain crosses the membrane as a helical; Signal-anchor for type II membrane protein span at residues 9–29; sequence MTWVALMVAGVSLAAFFALTA. At 30–153 the chain is on the periplasmic side; sequence FQKNLLYFYT…PADYSEYRKK (124 aa). 2 residues coordinate heme: His-124 and Tyr-128. A disordered region spans residues 134–153; that stretch reads AESLKKNGGLPADYSEYRKK.

It belongs to the CcmE/CycJ family.

It localises to the cell inner membrane. Functionally, heme chaperone required for the biogenesis of c-type cytochromes. Transiently binds heme delivered by CcmC and transfers the heme to apo-cytochromes in a process facilitated by CcmF and CcmH. The polypeptide is Cytochrome c-type biogenesis protein CcmE (Methylococcus capsulatus (strain ATCC 33009 / NCIMB 11132 / Bath)).